Reading from the N-terminus, the 242-residue chain is ATP-dependent dethiobiotin synthetase BioD (242 aa).

Glu12–Val17 is an ATP binding site. Residue Thr16 coordinates Mg(2+). Lys37 is an active-site residue. Substrate is bound at residue Ser41. ATP-binding positions include Asp51 and Glu112 to Gly115. Mg(2+) contacts are provided by Asp51 and Glu112.

Belongs to the dethiobiotin synthetase family. As to quaternary structure, homodimer. Mg(2+) is required as a cofactor.

It is found in the cytoplasm. The catalysed reaction is (7R,8S)-7,8-diammoniononanoate + CO2 + ATP = (4R,5S)-dethiobiotin + ADP + phosphate + 3 H(+). It functions in the pathway cofactor biosynthesis; biotin biosynthesis; biotin from 7,8-diaminononanoate: step 1/2. Its function is as follows. Catalyzes a mechanistically unusual reaction, the ATP-dependent insertion of CO2 between the N7 and N8 nitrogen atoms of 7,8-diaminopelargonic acid (DAPA, also called 7,8-diammoniononanoate) to form a ureido ring. This chain is ATP-dependent dethiobiotin synthetase BioD, found in Bacillus cereus (strain G9842).